The primary structure comprises 274 residues: Large ribosomal subunit protein uL2 (274 aa).

The interval 222–274 (GVAMNPVDHPHGGGEGRGKGHHPQSPWGQLAKGYKTRRGKKASDKLIVRRRNG) is disordered. The segment covering 229–239 (DHPHGGGEGRG) has biased composition (basic and acidic residues).

Belongs to the universal ribosomal protein uL2 family. As to quaternary structure, part of the 50S ribosomal subunit. Forms a bridge to the 30S subunit in the 70S ribosome.

One of the primary rRNA binding proteins. Required for association of the 30S and 50S subunits to form the 70S ribosome, for tRNA binding and peptide bond formation. It has been suggested to have peptidyltransferase activity; this is somewhat controversial. Makes several contacts with the 16S rRNA in the 70S ribosome. This Thermosipho africanus (strain TCF52B) protein is Large ribosomal subunit protein uL2.